Consider the following 308-residue polypeptide: MKSIKRFALSAMGVAMLLVLTGCVNVDKTTGQPTGFIWNTIGAPMAEAIKYFATDKGLGFGVAIIIVTIIVRLIILPLGIYQSWKATLHSEKMNALKHVLEPHQTRLKEATTQEEKLEAQQALFAAQKEHGISMFGGVGCFPILLQMPFFSAIYFAAQHTEGVAQASYLGIPLGSPSMILVACAGVLYYLQSLLSLHGVEDEMQREQIKKMIYMSPLMIVVFSLFSPASVTLYWVVGGFMMILQQFIVNYIVRPKLRKKVREELAKNPPKASAFSKPSGRKDVTPEQPTAITSKKKHKNRNAGKQRSR.

The N-terminal stretch at 1 to 22 (MKSIKRFALSAMGVAMLLVLTG) is a signal peptide. The N-palmitoyl cysteine moiety is linked to residue cysteine 23. A lipid anchor (S-diacylglycerol cysteine) is attached at cysteine 23. The next 5 helical transmembrane spans lie at 60-80 (FGVAIIIVTIIVRLIILPLGI), 135-155 (FGGVGCFPILLQMPFFSAIYF), 168-188 (YLGIPLGSPSMILVACAGVLY), 211-226 (MIYMSPLMIVVFSLFS), and 232-252 (LYWVVGGFMMILQQFIVNYIV). The tract at residues 263–308 (ELAKNPPKASAFSKPSGRKDVTPEQPTAITSKKKHKNRNAGKQRSR) is disordered. A compositionally biased stretch (basic residues) spans 293 to 308 (SKKKHKNRNAGKQRSR).

This sequence belongs to the OXA1/ALB3/YidC family. Type 2 subfamily.

The protein localises to the cell membrane. In terms of biological role, required for the insertion and/or proper folding and/or complex formation of integral membrane proteins into the membrane. Involved in integration of membrane proteins that insert both dependently and independently of the Sec translocase complex, as well as at least some lipoproteins. The sequence is that of Membrane protein insertase YidC 1 from Streptococcus pneumoniae serotype 4 (strain ATCC BAA-334 / TIGR4).